Here is a 90-residue protein sequence, read N- to C-terminus: Putative cytochrome c oxidase subunit 5b-like (90 aa).

Zn(2+) contacts are provided by Cys43, Cys67, and Cys70.

The protein belongs to the cytochrome c oxidase subunit 5B (TC 3.D.4.11) family.

This Arabidopsis thaliana (Mouse-ear cress) protein is Putative cytochrome c oxidase subunit 5b-like.